Consider the following 461-residue polypeptide: Cyclin-A2-4 (461 aa).

It belongs to the cyclin family. Cyclin AB subfamily.

In Arabidopsis thaliana (Mouse-ear cress), this protein is Cyclin-A2-4 (CYCA2-4).